A 177-amino-acid polypeptide reads, in one-letter code: Inorganic pyrophosphatase (177 aa).

Substrate-binding residues include K31, R45, and Y57. Mg(2+) is bound by residues D67, D72, and D104. Residue Y142 coordinates substrate.

It belongs to the PPase family. As to quaternary structure, homohexamer. Mg(2+) is required as a cofactor.

Its subcellular location is the cytoplasm. The enzyme catalyses diphosphate + H2O = 2 phosphate + H(+). Its function is as follows. Catalyzes the hydrolysis of inorganic pyrophosphate (PPi) forming two phosphate ions. This chain is Inorganic pyrophosphatase, found in Neisseria meningitidis serogroup A / serotype 4A (strain DSM 15465 / Z2491).